Consider the following 313-residue polypeptide: Ribosomal RNA small subunit methyltransferase H (313 aa).

Residues 35 to 37 (GGH), D55, F79, D101, and Q108 contribute to the S-adenosyl-L-methionine site.

Belongs to the methyltransferase superfamily. RsmH family.

Its subcellular location is the cytoplasm. It carries out the reaction cytidine(1402) in 16S rRNA + S-adenosyl-L-methionine = N(4)-methylcytidine(1402) in 16S rRNA + S-adenosyl-L-homocysteine + H(+). Functionally, specifically methylates the N4 position of cytidine in position 1402 (C1402) of 16S rRNA. This chain is Ribosomal RNA small subunit methyltransferase H, found in Escherichia coli O81 (strain ED1a).